Here is a 372-residue protein sequence, read N- to C-terminus: DSC E3 ubiquitin ligase complex subunit 2 (372 aa).

5 helical membrane passes run 26–46 (VVAG…LHLL), 54–74 (ILLW…LFII), 95–115 (YMFI…SLLF), 126–146 (TFLI…TVFV), and 160–180 (VIPM…NAFL). The interval 246-314 (TENENQVENP…LPTGPASQLY (69 aa)) is disordered. Residues 249–268 (ENQVENPVSNADANDSPTRQ) show a composition bias toward polar residues. Position 264 is a phosphoserine (S264). At T266 the chain carries Phosphothreonine. Residues 269-284 (NARATAIASSSNTAAS) are compositionally biased toward low complexity. Polar residues predominate over residues 286 to 305 (RNRQQISHPPLGRTSSSSVL). In terms of domain architecture, UBA spans 332 to 368 (EDINTVQTIMQTSRAQAIQALSQTNDVQRAVELLLEQ).

In terms of assembly, component of the DSC E3 ubiquitin ligase complex composed of dsc1, dsc2, dsc3 and dsc4.

The protein resides in the golgi apparatus membrane. It carries out the reaction S-ubiquitinyl-[E2 ubiquitin-conjugating enzyme]-L-cysteine + [acceptor protein]-L-lysine = [E2 ubiquitin-conjugating enzyme]-L-cysteine + N(6)-ubiquitinyl-[acceptor protein]-L-lysine.. It functions in the pathway protein modification; protein ubiquitination. Its function is as follows. Component of the DSC E3 ubiquitin ligase complex which is required for the sre1 transcriptional activator proteolytic cleavage to release the soluble transcription factor from the membrane in low oxygen or sterol conditions. The complex also plays an important role in the multivesicular body (MVB) pathway and functions in a post-endoplasmic reticulum pathway for protein degradation. The protein is DSC E3 ubiquitin ligase complex subunit 2 (dsc2) of Schizosaccharomyces pombe (strain 972 / ATCC 24843) (Fission yeast).